The sequence spans 528 residues: Phosphoenolpyruvate carboxykinase (ATP) (528 aa).

The substrate site is built by Arg-56, Tyr-192, and Lys-198. ATP contacts are provided by residues Lys-198, His-217, and 233–241 (GLSGTGKTT). Mn(2+) is bound by residues Lys-198 and His-217. Asp-254 lines the Mn(2+) pocket. Positions 282, 319, and 444 each coordinate ATP. Arg-319 contacts substrate.

Belongs to the phosphoenolpyruvate carboxykinase (ATP) family. It depends on Mn(2+) as a cofactor.

The protein localises to the cytoplasm. It catalyses the reaction oxaloacetate + ATP = phosphoenolpyruvate + ADP + CO2. It functions in the pathway carbohydrate biosynthesis; gluconeogenesis. In terms of biological role, involved in the gluconeogenesis. Catalyzes the conversion of oxaloacetate (OAA) to phosphoenolpyruvate (PEP) through direct phosphoryl transfer between the nucleoside triphosphate and OAA. The chain is Phosphoenolpyruvate carboxykinase (ATP) from Bacillus cereus (strain 03BB102).